Here is a 100-residue protein sequence, read N- to C-terminus: Urease subunit gamma (100 aa).

It belongs to the urease gamma subunit family. Heterotrimer of UreA (gamma), UreB (beta) and UreC (alpha) subunits. Three heterotrimers associate to form the active enzyme.

The protein resides in the cytoplasm. It catalyses the reaction urea + 2 H2O + H(+) = hydrogencarbonate + 2 NH4(+). It functions in the pathway nitrogen metabolism; urea degradation; CO(2) and NH(3) from urea (urease route): step 1/1. This Vibrio parahaemolyticus protein is Urease subunit gamma.